The following is a 264-amino-acid chain: Apolipoprotein A-I (264 aa).

An N-terminal signal peptide occupies residues 1-18; it reads MKAVVLTVAVLFLTGSQA. Tandem repeats lie at residues 67-88 and 89-110. A 10 X approximate tandem repeats region spans residues 67–264; sequence LKLLDNWDTL…DDAAKKLSSQ (198 aa). A Methionine sulfoxide modification is found at M109. The stretch at 111 to 121 is one 3; half-length repeat; the sequence is KDLEEVKQKVQ. A run of 3 repeats spans residues 122-143, 144-165, and 166-187. A 7; truncated repeat occupies 188–207; it reads PYSDKMRERLAERLTALKDS. M193 bears the Methionine sulfoxide mark. Copy 8 of the repeat occupies 208 to 229; it reads ASFAEYHAKASEHLKTLREKAK. Residues 230–240 form a 9; half-length repeat; it reads PAIEDLGQGLL. Repeat unit 10 spans residues 241–264; that stretch reads PVLENLKASFLSAIDDAAKKLSSQ.

This sequence belongs to the apolipoprotein A1/A4/E family. Homodimer. Interacts with APOA1BP and CLU. Component of a sperm activating protein complex (SPAP), consisting of APOA1, an immunoglobulin heavy chain, an immunoglobulin light chain and albumin. Interacts with NDRG1. Interacts with SCGB3A2. Interacts with NAXE and YJEFN3. In terms of processing, glycosylated. Post-translationally, palmitoylated. Phosphorylation sites are present in the extracellular medium.

The protein localises to the secreted. Functionally, participates in the reverse transport of cholesterol from tissues to the liver for excretion by promoting cholesterol efflux from tissues and by acting as a cofactor for the lecithin cholesterol acyltransferase (LCAT). As part of the SPAP complex, activates spermatozoa motility. This chain is Apolipoprotein A-I (APOA1), found in Castor canadensis (American beaver).